Consider the following 453-residue polypeptide: DNA repair protein RadA (453 aa).

Residues 10-27 (CQECGYQSPKYLGRCPNC) form a C4-type zinc finger. An ATP-binding site is contributed by 95 to 102 (GDPGIGKS). Residues 251–255 (KNRFG) carry the RadA KNRFG motif motif. The interval 350 to 453 (DAYLKSAGGV…VGQVLNAVFS (104 aa)) is lon-protease-like.

This sequence belongs to the RecA family. RadA subfamily.

DNA-dependent ATPase involved in processing of recombination intermediates, plays a role in repairing DNA breaks. Stimulates the branch migration of RecA-mediated strand transfer reactions, allowing the 3' invading strand to extend heteroduplex DNA faster. Binds ssDNA in the presence of ADP but not other nucleotides, has ATPase activity that is stimulated by ssDNA and various branched DNA structures, but inhibited by SSB. Does not have RecA's homology-searching function. The protein is DNA repair protein RadA of Streptococcus pyogenes serotype M1.